Reading from the N-terminus, the 416-residue chain is Protein LAZY 1 (416 aa).

Residues 63 to 83 (FTFGGSGLLTIGTLGIAAVAI) traverse the membrane as a helical segment. Residues 69–75 (GLLTIGT) carry the IGT motif motif. Disordered stretches follow at residues 266-306 (AAAA…GMPA) and 337-361 (KKSRNRGATDNGGGAVATGDPDGPL). The span at 270-282 (GVGGDRAGKGGGY) shows a compositional bias: gly residues. Residues 278–295 (KGGGYKTMKKRKVKDEKG) carry the Nuclear localization signal motif.

It belongs to the LAZY family. In terms of tissue distribution, expressed specifically in the cells at the inner side of the vascular bundles of young leaf sheaths and peripheral cylinders of vascular bundles in the unelongated stems. Expressed in the leaf sheath pulvinus and the lamina joint.

The protein localises to the cell membrane. The protein resides in the nucleus. Involved in the regulation of shoot gravitropism and tiller angle through negative regulation of basipetal polar auxin transport (PAT). Acts as positive regulator of lateral auxin transport. Promotes vertical shoot growth. LAZY1 and TAC1 play opposite functions in the regulation of tiller growth angle. This Oryza sativa subsp. japonica (Rice) protein is Protein LAZY 1.